The primary structure comprises 299 residues: Phosphatidylcholine-sterol acyltransferase (299 aa).

Asn28 and Asn184 each carry an N-linked (GlcNAc...) asparagine glycan. Cysteines 225 and 268 form a disulfide. Asp257 functions as the Charge relay system in the catalytic mechanism. The N-linked (GlcNAc...) asparagine glycan is linked to Asn285. His289 (charge relay system) is an active-site residue. The N-linked (GlcNAc...) asparagine glycan is linked to Asn296.

Belongs to the AB hydrolase superfamily. Lipase family.

The protein localises to the secreted. The enzyme catalyses a sterol + a 1,2-diacyl-sn-glycero-3-phosphocholine = a sterol ester + a 1-acyl-sn-glycero-3-phosphocholine. APOA1 is the most potent activator in plasma. Also activated by APOE, APOC1 and APOA4. Its function is as follows. Central enzyme in the extracellular metabolism of plasma lipoproteins. Synthesized mainly in the liver and secreted into plasma where it converts cholesterol and phosphatidylcholines (lecithins) to cholesteryl esters and lysophosphatidylcholines on the surface of high and low density lipoproteins (HDLs and LDLs). The cholesterol ester is then transported back to the liver. Has a preference for plasma 16:0-18:2 or 18:O-18:2 phosphatidylcholines. Also produced in the brain by primary astrocytes, and esterifies free cholesterol on nascent APOE-containing lipoproteins secreted from glia and influences cerebral spinal fluid (CSF) APOE- and APOA1 levels. Together with APOE and the cholesterol transporter ABCA1, plays a key role in the maturation of glial-derived, nascent lipoproteins. Required for remodeling high-density lipoprotein particles into their spherical forms. The sequence is that of Phosphatidylcholine-sterol acyltransferase (LCAT) from Micromys minutus (European harvest mouse).